Consider the following 216-residue polypeptide: ATP phosphoribosyltransferase (216 aa).

It belongs to the ATP phosphoribosyltransferase family. Short subfamily. As to quaternary structure, heteromultimer composed of HisG and HisZ subunits.

Its subcellular location is the cytoplasm. The enzyme catalyses 1-(5-phospho-beta-D-ribosyl)-ATP + diphosphate = 5-phospho-alpha-D-ribose 1-diphosphate + ATP. Its pathway is amino-acid biosynthesis; L-histidine biosynthesis; L-histidine from 5-phospho-alpha-D-ribose 1-diphosphate: step 1/9. Functionally, catalyzes the condensation of ATP and 5-phosphoribose 1-diphosphate to form N'-(5'-phosphoribosyl)-ATP (PR-ATP). Has a crucial role in the pathway because the rate of histidine biosynthesis seems to be controlled primarily by regulation of HisG enzymatic activity. This chain is ATP phosphoribosyltransferase, found in Synechococcus sp. (strain CC9902).